We begin with the raw amino-acid sequence, 461 residues long: Lysosomal dipeptide transporter MFSD1 (461 aa).

Residues 1–13 (MADREEHQGLLDG) are compositionally biased toward basic and acidic residues. The interval 1–22 (MADREEHQGLLDGDRDEDEGDK) is disordered. Positions 10 to 11 (LL) match the Dileucine internalization motif motif. 10 helical membrane-spanning segments follow: residues 37-57 (LLHR…SYFC), 81-101 (QLYA…GFLL), 111-131 (TVIF…GALA), 134-154 (FWLM…LAVA), 264-284 (LWLI…FIGL), 302-322 (AINS…GFLV), 331-351 (WVML…FTFW), 359-379 (LLGV…AFVV), 390-410 (FMQS…GSIL), and 416-436 (LFLE…VVLL).

It belongs to the major facilitator superfamily. In terms of assembly, homodimer. Interacts with lysosomal protein GLMP (via lumenal domain); the interaction starts while both proteins are still in the endoplasmic reticulum and is required for stabilization of MFSD1 in lysosomes but has no direct effect on its targeting to lysosomes or transporter activity.

It is found in the lysosome membrane. It catalyses the reaction L-alpha-aminoacyl-L-arginine(out) = L-alpha-aminoacyl-L-arginine(in). It carries out the reaction L-arginyl-L-alpha-amino acid(out) = L-arginyl-L-alpha-amino acid(in). The enzyme catalyses L-arginyl-glycine(out) = L-arginyl-glycine(in). The catalysed reaction is L-alpha-aminoacyl-L-lysine(out) = L-alpha-aminoacyl-L-lysine(in). It catalyses the reaction L-aspartyl-L-lysine(out) = L-aspartyl-L-lysine(in). It carries out the reaction L-alanyl-L-lysine(out) = L-alanyl-L-lysine(in). The enzyme catalyses L-lysyl-L-alpha-amino acid(out) = L-lysyl-L-alpha-amino acid(in). The catalysed reaction is L-lysyl-L-alanine(out) = L-lysyl-L-alanine(in). It catalyses the reaction L-lysyl-L-lysine(out) = L-lysyl-L-lysine(in). It carries out the reaction L-lysyl-glycine(out) = L-lysyl-glycine(in). The enzyme catalyses L-alpha-aminoacyl-L-histidine(out) = L-alpha-aminoacyl-L-histidine(in). The catalysed reaction is L-histidyl-L-alpha-amino acid(out) = L-histidyl-L-alpha-amino acid(in). It catalyses the reaction L-histidyl-glycine(out) = L-histidyl-glycine(in). Lysosomal dipeptide uniporter that selectively exports lysine, arginine or histidine-containing dipeptides with a net positive charge from the lysosome lumen into the cytosol. Could play a role in a specific type of protein O-glycosylation indirectly regulating macrophages migration and tissue invasion. Also essential for liver homeostasis. This Danio rerio (Zebrafish) protein is Lysosomal dipeptide transporter MFSD1 (mfsd1).